The primary structure comprises 500 residues: Low-density lipoprotein receptor-related protein 11 (500 aa).

The signal sequence occupies residues 1 to 37 (MASVAQESAGSQRRLPPRHGALRGLLLLCLWLPSGRA). Over 38 to 450 (ALPPAAPLSE…GGEHPAPETG (413 aa)) the chain is Extracellular. Residues 99-184 (AMPDAIIRTK…FALHSGYSSY (86 aa)) form the MANSC domain. 2 N-linked (GlcNAc...) asparagine glycosylation sites follow: N164 and N291. One can recognise a PKD domain in the interval 210–305 (PLSKAGQDVV…VLRAAYSTGG (96 aa)). Positions 309–345 (TCSRYHFFCDDGCCIDITLACDGVQQCPDGSDEDFCQ) constitute an LDL-receptor class A domain. Disulfide bonds link C310-C322, C317-C335, and C329-C344. The segment at 358 to 445 (AASPALPRTT…KGDGGGGEHP (88 aa)) is disordered. N401 is a glycosylation site (N-linked (GlcNAc...) asparagine). The chain crosses the membrane as a helical span at residues 451–473 (AVLPLALGLAITALLLLMVACRL). At 474-500 (RLVKQKLKKARPITSEESDYLINGMYL) the chain is on the cytoplasmic side. Residue S491 is modified to Phosphoserine.

Belongs to the LDLR family.

Its subcellular location is the membrane. This chain is Low-density lipoprotein receptor-related protein 11 (LRP11), found in Homo sapiens (Human).